The chain runs to 478 residues: Probable serine carboxypeptidase CPVL (478 aa).

The N-terminal stretch at 1 to 22 is a signal peptide; it reads MVRAKWKMVVSLILFMVSPGDG. 2 N-linked (GlcNAc...) asparagine glycosylation sites follow: asparagine 83 and asparagine 134. Serine 206 is an active-site residue. 2 N-linked (GlcNAc...) asparagine glycosylation sites follow: asparagine 309 and asparagine 350. Active-site residues include aspartate 390 and histidine 450.

This sequence belongs to the peptidase S10 family.

Functionally, may be involved in the digestion of phagocytosed particles in the lysosome, participation in an inflammatory protease cascade, and trimming of peptides for antigen presentation. This chain is Probable serine carboxypeptidase CPVL (Cpvl), found in Mus musculus (Mouse).